The chain runs to 314 residues: Epithelial-stromal interaction protein 1 (314 aa).

Disordered stretches follow at residues 1 to 72 (MYTR…PNES), 227 to 272 (WAGS…RAQI), and 289 to 314 (QGKS…SWGL). A compositionally biased stretch (basic and acidic residues) spans 18–30 (SRDHAGAGQRREL). S39 carries the post-translational modification Phosphoserine. The stretch at 71 to 180 (ESRRQKIQRI…QEDIRRATFR (110 aa)) forms a coiled coil. The span at 232–272 (AHRDSPQKEDNPRLQKTRDGHQKNKLLETKGQHQEEERAQI) shows a compositional bias: basic and acidic residues. A compositionally biased stretch (polar residues) spans 305 to 314 (NMNSTDSWGL).

As to expression, expressed in the spleen, with expression in T cells, B cells, natural killer cells and natural killer T cells and high expression in monocytes and macrophages.

Functionally, plays a role in M1 macrophage polarization and is required for the proper regulation of gene expression during M1 versus M2 macrophage differentiation. Might play a role in RELA/p65 and STAT1 phosphorylation and nuclear localization upon activation of macrophages. This chain is Epithelial-stromal interaction protein 1 (Epsti1), found in Mus musculus (Mouse).